Here is a 292-residue protein sequence, read N- to C-terminus: uncharacterized protein (292 aa).

A run of 4 helical transmembrane segments spans residues 17 to 37 (LFYT…FPAL), 135 to 155 (LIAV…IGQL), 166 to 186 (TTLW…YDIV), and 216 to 236 (FHGV…TALY). The segment at 267-292 (EKSEDKKSIVTSRIEEENEDEISDYE) is disordered. Residues 282–292 (EENEDEISDYE) show a composition bias toward acidic residues.

Its subcellular location is the membrane. This is an uncharacterized protein from Caenorhabditis elegans.